Consider the following 874-residue polypeptide: Probable cation-transporting P-type ATPase (874 aa).

Topologically, residues M1–K41 are cytoplasmic. A helical membrane pass occupies residues S42–S62. At G63–V79 the chain is on the extracellular side. The chain crosses the membrane as a helical span at residues Q80–F100. Over K101–L237 the chain is Cytoplasmic. The helical transmembrane segment at E238–L257 threads the bilayer. Over V258–A275 the chain is Extracellular. A helical membrane pass occupies residues L276 to T293. Topologically, residues F294–C644 are cytoplasmic. Catalysis depends on D331, which acts as the 4-aspartylphosphate intermediate. 2 residues coordinate Mg(2+): D589 and D593. A helical transmembrane segment spans residues K645–L664. At G665–F687 the chain is on the extracellular side. Residues S688–A708 traverse the membrane as a helical segment. Topologically, residues V709–L726 are cytoplasmic. The helical transmembrane segment at F727–F749 threads the bilayer. Over Y750–I770 the chain is Extracellular. Residues N771–S790 traverse the membrane as a helical segment. Over L791–N803 the chain is Cytoplasmic. Residues P804–F826 form a helical membrane-spanning segment. Topologically, residues I827–P844 are extracellular. Residues V845–K865 traverse the membrane as a helical segment. Topologically, residues L866–I874 are cytoplasmic.

It belongs to the cation transport ATPase (P-type) (TC 3.A.3) family. Type II subfamily.

It localises to the cell membrane. It catalyses the reaction ATP + H2O = ADP + phosphate + H(+). Its function is as follows. Could mediate calcium influx. The protein is Probable cation-transporting P-type ATPase (pacL) of Mycoplasma genitalium (strain ATCC 33530 / DSM 19775 / NCTC 10195 / G37) (Mycoplasmoides genitalium).